A 237-amino-acid chain; its full sequence is LexA repressor (237 aa).

The H-T-H motif DNA-binding region spans 26–46 (FDEMKDALDLRSKSGIHRLIT). Active-site for autocatalytic cleavage activity residues include Ser158 and Lys196.

It belongs to the peptidase S24 family. Homodimer.

It catalyses the reaction Hydrolysis of Ala-|-Gly bond in repressor LexA.. Functionally, represses a number of genes involved in the response to DNA damage (SOS response), including recA and lexA. In the presence of single-stranded DNA, RecA interacts with LexA causing an autocatalytic cleavage which disrupts the DNA-binding part of LexA, leading to derepression of the SOS regulon and eventually DNA repair. This chain is LexA repressor, found in Rhodopseudomonas palustris (strain BisB18).